We begin with the raw amino-acid sequence, 132 residues long: uncharacterized protein (132 aa).

3 consecutive transmembrane segments (helical) span residues 28–48, 59–79, and 106–126; these read LLRLISLCIPIIRPFSFLIYP, ILPSILPIIPFAISSSLLFSY, and LLVASFVYLPYRSPLPVVIEI.

The protein localises to the membrane. This is an uncharacterized protein from Schizosaccharomyces pombe (strain 972 / ATCC 24843) (Fission yeast).